The chain runs to 196 residues: Putative 3-methyladenine DNA glycosylase (196 aa).

The protein belongs to the DNA glycosylase MPG family.

In Chlorobium phaeobacteroides (strain DSM 266 / SMG 266 / 2430), this protein is Putative 3-methyladenine DNA glycosylase.